A 265-amino-acid polypeptide reads, in one-letter code: Mlc titration factor A (265 aa).

The Zn(2+) site is built by H111, H148, H152, and E211.

The protein belongs to the MtfA family. In terms of assembly, interacts with Mlc. Zn(2+) is required as a cofactor.

It is found in the cytoplasm. Its function is as follows. Involved in the modulation of the activity of the glucose-phosphotransferase system (glucose-PTS). Interacts with the transcriptional repressor Mlc, preventing its interaction with DNA and leading to the modulation of expression of genes regulated by Mlc, including ptsG, which encodes the PTS system glucose-specific EIICB component. In terms of biological role, shows zinc-dependent metallopeptidase activity. In Enterobacter sp. (strain 638), this protein is Mlc titration factor A.